Reading from the N-terminus, the 353-residue chain is WAT1-related protein At3g28100 (353 aa).

10 consecutive transmembrane segments (helical) span residues 12 to 32, 43 to 63, 81 to 101, 105 to 125, 137 to 157, 187 to 207, 219 to 239, 252 to 272, 283 to 303, and 308 to 328; these read AVFL…STLF, YAFL…SLFF, IGLL…GIEY, TLAS…AIIF, SVAK…VVLY, WLIG…SFIL, FTVS…IGLV, FDIT…YYVI, LYLA…SAVF, and LYLG…AVMW. The 129-residue stretch at 27–155 folds into the EamA domain; that stretch reads GISTLFKVAT…LSLIGALVVV (129 aa).

It belongs to the drug/metabolite transporter (DMT) superfamily. Plant drug/metabolite exporter (P-DME) (TC 2.A.7.4) family.

It localises to the membrane. This is WAT1-related protein At3g28100 from Arabidopsis thaliana (Mouse-ear cress).